Consider the following 85-residue polypeptide: Large ribosomal subunit protein bL31B (85 aa).

It belongs to the bacterial ribosomal protein bL31 family. Type B subfamily. As to quaternary structure, part of the 50S ribosomal subunit.

In Porphyromonas gingivalis (strain ATCC 33277 / DSM 20709 / CIP 103683 / JCM 12257 / NCTC 11834 / 2561), this protein is Large ribosomal subunit protein bL31B.